Reading from the N-terminus, the 93-residue chain is Small ribosomal subunit protein uS19 (93 aa).

This sequence belongs to the universal ribosomal protein uS19 family.

Its function is as follows. Protein S19 forms a complex with S13 that binds strongly to the 16S ribosomal RNA. The sequence is that of Small ribosomal subunit protein uS19 from Synechococcus sp. (strain JA-2-3B'a(2-13)) (Cyanobacteria bacterium Yellowstone B-Prime).